A 297-amino-acid chain; its full sequence is N-acetylneuraminate lyase (297 aa).

Positions 47 and 48 each coordinate aceneuramate. Y137 acts as the Proton donor in catalysis. The Schiff-base intermediate with substrate role is filled by K165. The aceneuramate site is built by T167, G189, D191, E192, and S208.

The protein belongs to the DapA family. NanA subfamily. In terms of assembly, homotetramer.

Its subcellular location is the cytoplasm. The enzyme catalyses aceneuramate = aldehydo-N-acetyl-D-mannosamine + pyruvate. Its pathway is amino-sugar metabolism; N-acetylneuraminate degradation; D-fructose 6-phosphate from N-acetylneuraminate: step 1/5. Catalyzes the reversible aldol cleavage of N-acetylneuraminic acid (sialic acid; Neu5Ac) to form pyruvate and N-acetylmannosamine (ManNAc) via a Schiff base intermediate. The sequence is that of N-acetylneuraminate lyase from Salmonella agona (strain SL483).